A 201-amino-acid chain; its full sequence is Probable quinol oxidase subunit 3 (201 aa).

5 helical membrane passes run 20 to 40, 62 to 82, 91 to 111, 133 to 153, and 180 to 200; these read LGFWVFLTAEFSLFGTLFATL, LVLIMTFALLISSYTCGIAIY, LMLIWMIITVLLGMVFVGFEI, FFILLGTHGAHVSLGIVWIIC, and FLDVVWIFIFTAVYMIGMVFS.

It belongs to the cytochrome c oxidase subunit 3 family.

It is found in the cell membrane. The enzyme catalyses 2 a quinol + O2 = 2 a quinone + 2 H2O. Its function is as follows. Catalyzes quinol oxidation with the concomitant reduction of oxygen to water. This chain is Probable quinol oxidase subunit 3 (qoxC), found in Staphylococcus saprophyticus subsp. saprophyticus (strain ATCC 15305 / DSM 20229 / NCIMB 8711 / NCTC 7292 / S-41).